Reading from the N-terminus, the 338-residue chain is 1-aminocyclopropane-1-carboxylate deaminase (338 aa).

Position 51 is an N6-(pyridoxal phosphate)lysine (Lys-51). Ser-78 (nucleophile) is an active-site residue.

Belongs to the ACC deaminase/D-cysteine desulfhydrase family. Homotrimer. Requires pyridoxal 5'-phosphate as cofactor.

It carries out the reaction 1-aminocyclopropane-1-carboxylate + H2O = 2-oxobutanoate + NH4(+). Its function is as follows. Catalyzes a cyclopropane ring-opening reaction, the irreversible conversion of 1-aminocyclopropane-1-carboxylate (ACC) to ammonia and alpha-ketobutyrate. Allows growth on ACC as a nitrogen source. This is 1-aminocyclopropane-1-carboxylate deaminase from Ralstonia pickettii (strain 12J).